We begin with the raw amino-acid sequence, 811 residues long: MSNISTKDIRKSKPKRGSGFDLLEVTESLGYQTHRKNGRNSWSKDDDNMLRSLVNESAKELGYENGLEDVKTIQQSNHLSKCIAWDVLATRFKHTVRTSKDVRKRWTGSLDPNLKKGKWTQEEDEQLLKAYEEHGPHWLSISMDIPGRTEDQCAKRYIEVLGPGSKGRLREWTLEEDLNLISKVKAYGTKWRKISSEMEFRPSLTCRNRWRKIITMVVRGQASEVITKAIKENKNIDMTDGKLRQHPIADSDIRSDSTPNKEEQLQLSQQNNPSLIKQDILNVKENESSKLPRLKDNDGPILNDSKPQALPPLKEISAPPPIRMTQVGQTHTSGSIRSKVSLPIEGLSQMNKQSPGGISDSPQTSLPPAFNPASLDEHMMNSNSISDSPKHAYSTVKTREPNSSSTQWKFTLKDGQGLSISNGTIDSTKLVKELVDQAKKYSLKISIHQHIHNHYVTSTDHPVSSNTGLSNIGNINGNPLLMDSFPHMGRQLGNGLPGLNSNSDTFNPEYRTSLDNMDSDFLSRTPNYNAFSLEATSHNPADNANELGSQSNRETNSPSVFYPQANTLIPTNSTATNNEIIQGNVSANSMSPNFNGTNGKAPSSTASYTTSGSEMPPDVGPNRIAHFNYLPPTIRPHLGSSDATRGADLNKLLNPSPNSVRSNGSKTKKKEKRKSESSQHHSSSSVTTNKFNHIDQSEISRTTSRSDTPLRDEDGLDFWETLRSLATTNPNPPVEKSAENDGAKPQVVHQGIGSHTEDSSLGSHSGGYDFFNELLDKKADTLHNEAKKTSEHDMTSGGSTDNGSVLPLNPS.

The Myb-like domain maps to 34-110 (HRKNGRNSWS…DVRKRWTGSL (77 aa)). 2 consecutive HTH myb-type domains span residues 111–165 (DPNL…GPGS) and 166–218 (KGRL…TMVV). 2 consecutive DNA-binding regions (H-T-H motif) follow at residues 138-161 (WLSISMDIPGRTEDQCAKRYIEVL) and 191-214 (WRKISSEMEFRPSLTCRNRWRKII). Basic and acidic residues predominate over residues 237 to 264 (DMTDGKLRQHPIADSDIRSDSTPNKEEQ). 4 disordered regions span residues 237–320 (DMTD…SAPP), 348–379 (SQMNKQSPGGISDSPQTSLPPAFNPASLDEHM), 535–713 (ATSH…LRDE), and 782–811 (LHNEAKKTSEHDMTSGGSTDNGSVLPLNPS). Low complexity predominate over residues 265-275 (LQLSQQNNPSL). Positions 282–298 (NVKENESSKLPRLKDND) are enriched in basic and acidic residues. Polar residues-rich tracts occupy residues 348–366 (SQMNKQSPGGISDSPQTSL), 535–613 (ATSH…TSGS), and 653–664 (LNPSPNSVRSNG). The span at 782–794 (LHNEAKKTSEHDM) shows a compositional bias: basic and acidic residues.

Monomer.

Its subcellular location is the nucleus. Its function is as follows. Activates HIS4 transcription only in combination with PHO2/BAS2. BAS1 is also involved in the regulation of the purine biosynthesis pathway. The polypeptide is Myb-like DNA-binding protein BAS1 (BAS1) (Saccharomyces cerevisiae (strain ATCC 204508 / S288c) (Baker's yeast)).